A 328-amino-acid polypeptide reads, in one-letter code: Putative HTH-type transcriptional regulatory protein MA_3524 (328 aa).

In terms of domain architecture, HTH cro/C1-type spans Leu132–Leu190. The segment at residues Leu143–Glu162 is a DNA-binding region (H-T-H motif).

This is Putative HTH-type transcriptional regulatory protein MA_3524 from Methanosarcina acetivorans (strain ATCC 35395 / DSM 2834 / JCM 12185 / C2A).